The sequence spans 105 residues: Large ribosomal subunit protein bL21 (105 aa).

Belongs to the bacterial ribosomal protein bL21 family. Part of the 50S ribosomal subunit. Contacts protein L20.

Functionally, this protein binds to 23S rRNA in the presence of protein L20. The sequence is that of Large ribosomal subunit protein bL21 from Dictyoglomus turgidum (strain DSM 6724 / Z-1310).